A 382-amino-acid polypeptide reads, in one-letter code: Gibberellin 2-beta-dioxygenase 1 (382 aa).

The Fe2OG dioxygenase domain occupies 189–321 (DSDCLLRINH…RLSTIYFASP (133 aa)). Tyr-199 serves as a coordination point for 2-oxoglutarate. Residues His-241, Asp-243, and His-302 each coordinate Fe cation. 2-oxoglutarate is bound by residues Arg-312 and Ser-314.

Belongs to the iron/ascorbate-dependent oxidoreductase family. GA2OX subfamily. L-ascorbate serves as cofactor. Requires Fe(2+) as cofactor. As to expression, expressed in roots, shoot apex, and in the basal region of leaf primordia and young leaves.

It catalyses the reaction gibberellin A1 + 2-oxoglutarate + O2 = gibberellin A8 + succinate + CO2. Its function is as follows. Catalyzes the 2-beta-hydroxylation of several biologically active gibberellins, leading to the homeostatic regulation of their endogenous level. Catabolism of gibberellins (GAs) plays a central role in plant development. Controls the level of bioactive GAs in the shoot apical meristem, which regulates the vegetative to reproductive phase transition. In vitro, converts GA1, GA4, GA9, GA20, and GA44 to the corresponding 2-beta-hydroxylated products GA8, GA34, GA51, GA29, and GA98, respectively. The polypeptide is Gibberellin 2-beta-dioxygenase 1 (Oryza sativa subsp. japonica (Rice)).